Reading from the N-terminus, the 4690-residue chain is Nonribosomal peptide synthetase sidN (4690 aa).

The tract at residues 238–656 (ARVRENPGRI…LGRLSSDQIK (419 aa)) is adenylation 1. A Carrier 1 domain is found at 779 to 856 (SSSIPMLQSV…DLDTKAQQAL (78 aa)). Ser816 is subject to O-(pantetheine 4'-phosphoryl)serine. The condensation 1 stretch occupies residues 924–1175 (APGGKAFIQH…AFGNTMSDRF (252 aa)). Residues 1349–1760 (EFAQKSPNAI…GRKDDLVKIR (412 aa)) are adenylation 2. A Carrier 2 domain is found at 1889–1965 (PAWCIKHRPL…DLINHLSVKR (77 aa)). O-(pantetheine 4'-phosphoryl)serine is present on Ser1926. A condensation 2 region spans residues 2001 to 2285 (PTTVFQDGML…SERLLESQLV (285 aa)). Residues 2464–2869 (TWAKTHPEWK…GRKDEQVKVR (406 aa)) form an adenylation 3 region. A Carrier 3 domain is found at 3002-3079 (RDLTSIEKQI…ELGRMKNALK (78 aa)). Ser3040 bears the O-(pantetheine 4'-phosphoryl)serine mark. Positions 3121-3530 (CMPLQEVLVA…QMESLVTSFT (410 aa)) are condensation 3. In terms of domain architecture, Carrier 4 spans 3564–3637 (SVLEQQIRDV…KLATHIQTTS (74 aa)). The residue at position 3598 (Ser3598) is an O-(pantetheine 4'-phosphoryl)serine. The interval 3679 to 4087 (VYPLTPLQAG…FESIRKHPDE (409 aa)) is condensation 4. The Carrier 5 domain occupies 4119 to 4195 (SAIDQFLDPL…KLCEVAFAKS (77 aa)). Ser4156 is subject to O-(pantetheine 4'-phosphoryl)serine. The condensation 5 stretch occupies residues 4262-4589 (WVFKAENGLD…FNAHLNILWN (328 aa)).

It belongs to the NRP synthetase family.

It participates in siderophore biosynthesis. Functionally, nonribosomal peptide synthetase required for the biosynthetis of epichloenin A, an extracellular siderophore that plays a crucial role in endophyte-grass symbioses. SidN assembles epichloenin A by activating and incorporating three trans-anhydromevalonylhydroxyornithine (trans-AMHO), 1 glutamine and 4 glycine moieties. Trans-AMHO is produced from L-ornithine via 2 steps involving a L-ornithine N(5)-monooxygenase and an AHMO-N(5)-transacylase that have still to be identified. The third adenylation domain (A3) of sidN incorporates the hydroxamate groups of the siderophore which forms an octahedral iron complex. The other component amino acids are assembled by sidN adenylation domains A1 and A2. The polypeptide is Nonribosomal peptide synthetase sidN (Epichloe festucae (strain Fl1)).